The sequence spans 245 residues: Protein-glutamine gamma-glutamyltransferase (245 aa).

This sequence belongs to the bacillus TGase family.

The catalysed reaction is L-glutaminyl-[protein] + L-lysyl-[protein] = [protein]-L-lysyl-N(6)-5-L-glutamyl-[protein] + NH4(+). In terms of biological role, probably plays a role in the assembly of the spore coat proteins by catalyzing epsilon-(gamma-glutamyl)lysine cross-links. In wild-type spores at 37 degrees Celsius, tgl mediates the cross-linking of GerQ in higher molecular mass forms, probably in cooperation with YabG. This Bacillus subtilis (strain 168) protein is Protein-glutamine gamma-glutamyltransferase (tgl).